The primary structure comprises 161 residues: Nucleotide-binding protein BamMC406_2474 (161 aa).

This sequence belongs to the YajQ family.

Its function is as follows. Nucleotide-binding protein. This chain is Nucleotide-binding protein BamMC406_2474, found in Burkholderia ambifaria (strain MC40-6).